The following is a 466-amino-acid chain: uncharacterized protein (466 aa).

An Autotransporter domain is found at 178–466 (SQGSASSMWM…QGMLGVKYSW (289 aa)).

This is an uncharacterized protein from Escherichia coli (strain K12).